Here is a 984-residue protein sequence, read N- to C-terminus: Protein translocase subunit SecA (984 aa).

Residues Gln96, 114-118 (GEGKT), and Asp595 each bind ATP. 2 stretches are compositionally biased toward basic and acidic residues: residues 930 to 942 (EHEEEKKHQRLLE) and 952 to 971 (KSDKKPRPKTLKERLKEERL). The interval 930–984 (EHEEEKKHQRLLEEAELQGVQGKSDKKPRPKTLKERLKEERLRKRKLKAKKKEQE) is disordered. The segment covering 972-984 (RKRKLKAKKKEQE) has biased composition (basic residues).

This sequence belongs to the SecA family. Monomer and homodimer. Part of the essential Sec protein translocation apparatus which comprises SecA, SecYEG and auxiliary proteins SecDF. Other proteins may also be involved.

Its subcellular location is the cell inner membrane. It localises to the cytoplasm. The enzyme catalyses ATP + H2O + cellular proteinSide 1 = ADP + phosphate + cellular proteinSide 2.. Functionally, part of the Sec protein translocase complex. Interacts with the SecYEG preprotein conducting channel. Has a central role in coupling the hydrolysis of ATP to the transfer of proteins into and across the cell membrane, serving as an ATP-driven molecular motor driving the stepwise translocation of polypeptide chains across the membrane. The chain is Protein translocase subunit SecA from Aquifex aeolicus (strain VF5).